We begin with the raw amino-acid sequence, 506 residues long: MKKILFMDTTLRDGEQSPGVNLNEQEKLQIARQLERLGIHVMEAGFAAASEGDFQSVKRIANTIQNATVMSLARAKESDIRRAYEAVKGAVSPRLHVFLATSDIHMKYKLCMSKEDVLDSIYRSVTLGKSLFPTVQFSAEDATRTARDFLAEAVEVAIRAGANVINIPDTVGYTNPEEYYSLFKYLQESVPSYEKAIFSCHCHDDLGMAVANSLAAVEGGALQVEGTINGIGERAGNAALEEVAVALHIRKDFYKAEPSMTLKEIKATSTLVSRLTGMVVPKNKAIVGANAFAHESGIHQDGVLKEVTTYEIIEPALVGESQNLFVLGKHSGRHAFTEKMKELGYEFTNDERDAVFEAFKKLADRKKEITEEDLRALMLGEAAFAAQQYNITQLQVHFVSNSTQCATVVLKDEEGNVFEDAATGSGSIEAIYNAIQRILGLECELADYRIQSITQGQDALAHVHVELKEGAHQVSGFGVAQDVLEASARAYVHAAGKLKSFIQLVK.

Residues 4–266 (ILFMDTTLRD…EPSMTLKEIK (263 aa)) form the Pyruvate carboxyltransferase domain. Residues Asp-13, His-201, His-203, and Asn-237 each coordinate Mn(2+). The interval 390–506 (NITQLQVHFV…KLKSFIQLVK (117 aa)) is regulatory domain.

The protein belongs to the alpha-IPM synthase/homocitrate synthase family. LeuA type 1 subfamily. Homodimer. It depends on Mn(2+) as a cofactor.

It localises to the cytoplasm. The catalysed reaction is 3-methyl-2-oxobutanoate + acetyl-CoA + H2O = (2S)-2-isopropylmalate + CoA + H(+). It participates in amino-acid biosynthesis; L-leucine biosynthesis; L-leucine from 3-methyl-2-oxobutanoate: step 1/4. Its function is as follows. Catalyzes the condensation of the acetyl group of acetyl-CoA with 3-methyl-2-oxobutanoate (2-ketoisovalerate) to form 3-carboxy-3-hydroxy-4-methylpentanoate (2-isopropylmalate). The protein is 2-isopropylmalate synthase of Bacillus cereus (strain ZK / E33L).